Consider the following 278-residue polypeptide: Urease accessory protein UreD (278 aa).

The protein belongs to the UreD family. UreD, UreF and UreG form a complex that acts as a GTP-hydrolysis-dependent molecular chaperone, activating the urease apoprotein by helping to assemble the nickel containing metallocenter of UreC. The UreE protein probably delivers the nickel.

It localises to the cytoplasm. Its function is as follows. Required for maturation of urease via the functional incorporation of the urease nickel metallocenter. The protein is Urease accessory protein UreD of Staphylococcus aureus (strain JH1).